We begin with the raw amino-acid sequence, 714 residues long: Fatty acid oxidation complex subunit alpha (714 aa).

The segment at 1 to 190 (MEMASAFTLN…KLGLVDDVVP (190 aa)) is enoyl-CoA hydratase. The tract at residues 306-714 (APLNSVGILG…FWKTTATDLQ (409 aa)) is 3-hydroxyacyl-CoA dehydrogenase.

This sequence in the N-terminal section; belongs to the enoyl-CoA hydratase/isomerase family. The protein in the central section; belongs to the 3-hydroxyacyl-CoA dehydrogenase family. Heterotetramer of two alpha chains (FadJ) and two beta chains (FadI).

It is found in the cytoplasm. It carries out the reaction a (3S)-3-hydroxyacyl-CoA = a (2E)-enoyl-CoA + H2O. The enzyme catalyses a 4-saturated-(3S)-3-hydroxyacyl-CoA = a (3E)-enoyl-CoA + H2O. The catalysed reaction is a (3S)-3-hydroxyacyl-CoA + NAD(+) = a 3-oxoacyl-CoA + NADH + H(+). It catalyses the reaction (3S)-3-hydroxybutanoyl-CoA = (3R)-3-hydroxybutanoyl-CoA. It functions in the pathway lipid metabolism; fatty acid beta-oxidation. In terms of biological role, catalyzes the formation of a hydroxyacyl-CoA by addition of water on enoyl-CoA. Also exhibits 3-hydroxyacyl-CoA epimerase and 3-hydroxyacyl-CoA dehydrogenase activities. This is Fatty acid oxidation complex subunit alpha from Escherichia coli O17:K52:H18 (strain UMN026 / ExPEC).